The following is a 160-amino-acid chain: MVKVKVERSEDADESVVASGDVTIKEEESYDDKLIFVNAIAKPMAGKKLAKKCYKLVKKAMKHKTFLRNGLKDVQTRLRKGETGICIFAGDVTPVDIMCHLPAVCEEKGIPYAYTPSRADLGAAMGVKRGTVALLVRQNDEYKDLYDEVKEELSALNIPV.

This sequence belongs to the eukaryotic ribosomal protein eL8 family. Component of the small nucleolar ribonucleoprotein particle containing H/ACA-type snoRNAs (H/ACA snoRNPs).

It localises to the nucleus. The protein localises to the nucleolus. Its function is as follows. Required for ribosome biogenesis. Part of a complex which catalyzes pseudouridylation of rRNA. This involves the isomerization of uridine such that the ribose is subsequently attached to C5, instead of the normal N1. Pseudouridine ('psi') residues may serve to stabilize the conformation of rRNAs. The polypeptide is H/ACA ribonucleoprotein complex subunit 2-like protein (NHP2) (Drosophila yakuba (Fruit fly)).